A 92-amino-acid polypeptide reads, in one-letter code: Acylphosphatase (92 aa).

An intrachain disulfide couples Cys-5 to Cys-49. One can recognise an Acylphosphatase-like domain in the interval 5-92; that stretch reads CIIAWIYGRV…SGELTDFRIR (88 aa). Active-site residues include Arg-20 and Asn-38.

This sequence belongs to the acylphosphatase family.

It catalyses the reaction an acyl phosphate + H2O = a carboxylate + phosphate + H(+). The chain is Acylphosphatase from Shigella boydii serotype 4 (strain Sb227).